A 369-amino-acid chain; its full sequence is Aminomethyltransferase (369 aa).

It belongs to the GcvT family. As to quaternary structure, the glycine cleavage system is composed of four proteins: P, T, L and H.

It catalyses the reaction N(6)-[(R)-S(8)-aminomethyldihydrolipoyl]-L-lysyl-[protein] + (6S)-5,6,7,8-tetrahydrofolate = N(6)-[(R)-dihydrolipoyl]-L-lysyl-[protein] + (6R)-5,10-methylene-5,6,7,8-tetrahydrofolate + NH4(+). The glycine cleavage system catalyzes the degradation of glycine. The chain is Aminomethyltransferase from Synechococcus sp. (strain WH7803).